The sequence spans 292 residues: UPF0725 protein At4g28920 (292 aa).

Acidic residues predominate over residues 1-17; sequence MSENDSSESDIEMDPEE. Residues 1-24 are disordered; that stretch reads MSENDSSESDIEMDPEEEKVYRRQ.

Belongs to the UPF0725 (EMB2204) family.

This Arabidopsis thaliana (Mouse-ear cress) protein is UPF0725 protein At4g28920.